A 153-amino-acid chain; its full sequence is NADH dehydrogenase [ubiquinone] 1 beta subcomplex subunit 11, mitochondrial (153 aa).

The N-terminal 29 residues, Met1 to Trp29, are a transit peptide targeting the mitochondrion. The tract at residues Pro40–Tyr76 is disordered. The span at Leu66 to Tyr76 shows a compositional bias: basic and acidic residues. Residues Leu89–Leu109 traverse the membrane as a helical segment.

This sequence belongs to the complex I NDUFB11 subunit family. As to quaternary structure, complex I is composed of 45 different subunits. Interacts with BCAP31. As to expression, ubiquitous.

It is found in the mitochondrion inner membrane. Accessory subunit of the mitochondrial membrane respiratory chain NADH dehydrogenase (Complex I), that is believed not to be involved in catalysis. Complex I functions in the transfer of electrons from NADH to the respiratory chain. The immediate electron acceptor for the enzyme is believed to be ubiquinone. The polypeptide is NADH dehydrogenase [ubiquinone] 1 beta subcomplex subunit 11, mitochondrial (NDUFB11) (Homo sapiens (Human)).